A 264-amino-acid polypeptide reads, in one-letter code: Catechol O-methyltransferase B (264 aa).

The signal sequence occupies residues 1-29 (MLGVLLCWCLGASVLLYVLYSWLIPAAVQ). Residue Asn31 is glycosylated (N-linked (GlcNAc...) asparagine). S-adenosyl-L-methionine contacts are provided by Val92, Ser122, Glu140, and Asp191. Asp191 serves as a coordination point for Mg(2+). Lys194 contacts substrate. Mg(2+)-binding residues include Asp219 and Asn220. Substrate contacts are provided by Asn220 and Glu249.

This sequence belongs to the class I-like SAM-binding methyltransferase superfamily. Cation-dependent O-methyltransferase family. It depends on Mg(2+) as a cofactor. In terms of tissue distribution, strongly expressed in eye, diencephalon, spinal cord, hindbrain, liver, kidney and telencephalon. Also detected at very low levels in muscle, spleen, anterior gut and heart. In eye, expressed strongly in retina. In brain, expressed in the central part of the telencephalon, the periventricular gray zone of the optic tectum, the periglomerular nucleus, the olfactory bulb, and the region adjacent to the diencephalic ventricle in the hypothalamus. Expressed in gill, with strongest expression in gill filaments nearest the gill arch, and in esophageal epithelium.

The protein resides in the secreted. It carries out the reaction a catechol + S-adenosyl-L-methionine = a guaiacol + S-adenosyl-L-homocysteine + H(+). In terms of biological role, catalyzes the O-methylation, and thereby the inactivation, of catecholamine neurotransmitters and catechol hormones. The sequence is that of Catechol O-methyltransferase B from Danio rerio (Zebrafish).